The sequence spans 200 residues: Superoxide dismutase [Fe] (200 aa).

Positions 28, 82, 165, and 169 each coordinate Fe cation.

The protein belongs to the iron/manganese superoxide dismutase family. In terms of assembly, homodimer. It depends on Fe cation as a cofactor.

The catalysed reaction is 2 superoxide + 2 H(+) = H2O2 + O2. In terms of biological role, destroys superoxide anion radicals which are normally produced within the cells and which are toxic to biological systems. In Rhodobacter capsulatus (Rhodopseudomonas capsulata), this protein is Superoxide dismutase [Fe] (sodB).